Here is a 182-residue protein sequence, read N- to C-terminus: Transmembrane and coiled-coil domain-containing protein 2 (182 aa).

A helical transmembrane segment spans residues 51 to 71 (VQIILRISFLILLGIGIYALW). The stretch at 124–151 (GLQEKILKKLKTVENKMKNLEGIIVAQK) forms a coiled coil.

It is found in the membrane. The polypeptide is Transmembrane and coiled-coil domain-containing protein 2 (TMCO2) (Homo sapiens (Human)).